The following is a 224-amino-acid chain: Large ribosomal subunit protein uL4 (224 aa).

Residues 52–109 (AAARQGTHSTKTRGDVSGGGRKPYRQKGTGRARQGSTRAPQFTGGGVVHGPKPRDYSQ) are disordered.

Belongs to the universal ribosomal protein uL4 family. As to quaternary structure, part of the 50S ribosomal subunit.

Functionally, one of the primary rRNA binding proteins, this protein initially binds near the 5'-end of the 23S rRNA. It is important during the early stages of 50S assembly. It makes multiple contacts with different domains of the 23S rRNA in the assembled 50S subunit and ribosome. Forms part of the polypeptide exit tunnel. The polypeptide is Large ribosomal subunit protein uL4 (Mycobacterium marinum (strain ATCC BAA-535 / M)).